The chain runs to 337 residues: Phytanoyl-CoA dioxygenase, peroxisomal (337 aa).

The N-terminal 30 residues, 1–30 (MDRNRASARLTVLLRHLGCRSAGTIIAHHT), are a transit peptide targeting the peroxisome. N6-succinyllysine occurs at positions 59 and 108. 2-oxoglutarate-binding positions include lysine 120, methionine 157, 175-177 (HQD), and tryptophan 193. Fe cation is bound by residues histidine 175 and aspartate 177. Lysine 252 carries the N6-succinyllysine modification. Residue histidine 264 coordinates Fe cation. Positions 266 and 275 each coordinate 2-oxoglutarate.

It belongs to the PhyH family. In terms of assembly, interacts with FKBP52 and PHYHIP. It depends on Fe cation as a cofactor. L-ascorbate is required as a cofactor. ATP serves as cofactor. Requires Mg(2+) as cofactor.

It is found in the peroxisome. The catalysed reaction is phytanoyl-CoA + 2-oxoglutarate + O2 = 2-hydroxyphytanoyl-CoA + succinate + CO2. It carries out the reaction 3-methylhexadecanoyl-CoA + 2-oxoglutarate + O2 = 2-hydroxy-3-methylhexadecanoyl-CoA + succinate + CO2. It catalyses the reaction hexadecanoyl-CoA + 2-oxoglutarate + O2 = 2-hydroxyhexadecanoyl-CoA + succinate + CO2. The enzyme catalyses octanoyl-CoA + 2-oxoglutarate + O2 = 2-hydroxyoctanoyl-CoA + succinate + CO2. The catalysed reaction is decanoyl-CoA + 2-oxoglutarate + O2 = 2-hydroxydecanoyl-CoA + succinate + CO2. It carries out the reaction 3-methylbutanoyl-CoA + 2-oxoglutarate + O2 = 2-hydroxy-3-methylbutanoyl-CoA + succinate + CO2. It catalyses the reaction heptadecanoyl-CoA + 2-oxoglutarate + O2 = 2-hydroxyheptadecanoyl-CoA + succinate + CO2. The enzyme catalyses eicosanoyl-CoA + 2-oxoglutarate + O2 = 2-hydroxyeicosanoyl-CoA + succinate + CO2. The catalysed reaction is octadecanoyl-CoA + 2-oxoglutarate + O2 = 2-hydroxyoctadecanoyl-CoA + succinate + CO2. It carries out the reaction dodecanoyl-CoA + 2-oxoglutarate + O2 = 2-hydroxydodecanoyl-CoA + succinate + CO2. It catalyses the reaction tetradecanoyl-CoA + 2-oxoglutarate + O2 = 2-hydroxytetradecanoyl-CoA + succinate + CO2. The enzyme catalyses hexanoyl-CoA + 2-oxoglutarate + O2 = 2-hydroxyhexanoyl-CoA + succinate + CO2. The catalysed reaction is butanoyl-CoA + 2-oxoglutarate + O2 = 2-hydroxybutanoyl-CoA + succinate + CO2. It carries out the reaction 3-methylnonanoyl-CoA + 2-oxoglutarate + O2 = 2-hydroxy-3-methylnonanoyl-CoA + succinate + CO2. It catalyses the reaction 3-methylundecanoyl-CoA + 2-oxoglutarate + O2 = 2-hydroxy-3-methylundecanoyl-CoA + succinate + CO2. The enzyme catalyses 3-methyldodecanoyl-CoA + 2-oxoglutarate + O2 = 2-hydroxy-3-methyldodecanoyl-CoA + succinate + CO2. The protein operates within lipid metabolism; fatty acid metabolism. In terms of biological role, catalyzes the 2-hydroxylation of not only racemic phytanoyl-CoA and the isomers of 3-methylhexadecanoyl-CoA, but also a variety of other mono- branched 3-methylacyl-CoA esters (with a chain length of at least seven carbon atoms) and straight-chain acyl-CoA esters (with a chain length longer than four carbon atoms). Does not hydroxylate long and very long straight chain acyl-CoAs or 2-methyl-and 4-methyl-branched acyl-CoAs. The chain is Phytanoyl-CoA dioxygenase, peroxisomal (PHYH) from Bos taurus (Bovine).